The chain runs to 44 residues: Alpha-amylase inhibitor magnificamide (44 aa).

Cystine bridges form between Cys-6/Cys-38, Cys-16/Cys-33, and Cys-20/Cys-39. The inhibitory motif stretch occupies residues 7-10; it reads YIYH.

It belongs to the sea anemone alpha-amylase inhibitor family.

It is found in the secreted. Mammalian alpha-amylase (AMY2A) inhibitor. The recombinant peptide inhibits porcine pancreatic (Ki=0.17 nM) and human saliva alpha-amylases (Ki=7.7 nM). It does not show antimicrobial (tested on fungi and bacteria) or channel modulating activities (tested on 18 voltage-gated sodium and potassium channles). The protein is Alpha-amylase inhibitor magnificamide of Heteractis magnifica (Magnificent sea anemone).